A 237-amino-acid polypeptide reads, in one-letter code: Urease accessory protein UreF (237 aa).

It belongs to the UreF family. In terms of assembly, ureD, UreF and UreG form a complex that acts as a GTP-hydrolysis-dependent molecular chaperone, activating the urease apoprotein by helping to assemble the nickel containing metallocenter of UreC. The UreE protein probably delivers the nickel.

The protein resides in the cytoplasm. In terms of biological role, required for maturation of urease via the functional incorporation of the urease nickel metallocenter. This is Urease accessory protein UreF from Methylibium petroleiphilum (strain ATCC BAA-1232 / LMG 22953 / PM1).